Consider the following 85-residue polypeptide: Cell division protein ZapA (85 aa).

A coiled-coil region spans residues 60-85 (AVNVVHDYLKLKEELERLKGQIKEKD).

This sequence belongs to the ZapA family. Type 2 subfamily. As to quaternary structure, homodimer. Interacts with FtsZ.

Its subcellular location is the cytoplasm. Activator of cell division through the inhibition of FtsZ GTPase activity, therefore promoting FtsZ assembly into bundles of protofilaments necessary for the formation of the division Z ring. It is recruited early at mid-cell but it is not essential for cell division. The polypeptide is Cell division protein ZapA (Bacillus licheniformis (strain ATCC 14580 / DSM 13 / JCM 2505 / CCUG 7422 / NBRC 12200 / NCIMB 9375 / NCTC 10341 / NRRL NRS-1264 / Gibson 46)).